A 280-amino-acid chain; its full sequence is Manganese transport system membrane protein MntC (280 aa).

The next 9 membrane-spanning stretches (helical) occupy residues 16–36 (ALIT…FIIL), 41–61 (LMGD…YMMG), 62–82 (MNFF…IGFV), 92–112 (TAIG…ISFA), 137–157 (TIII…EFLV), 168–188 (YGLN…LVTV), 193–213 (TVGI…AYLL), 221–241 (IVLA…FSYI), and 244–264 (LASG…AFLF).

It belongs to the ABC-3 integral membrane protein family.

It localises to the cell membrane. This protein is probably a component of a manganese permease, a binding protein-dependent, ATP-driven transport system. The protein is Manganese transport system membrane protein MntC (mntC) of Listeria monocytogenes serovar 1/2a (strain ATCC BAA-679 / EGD-e).